We begin with the raw amino-acid sequence, 189 residues long: Large ribosomal subunit protein uL10 (189 aa).

It belongs to the universal ribosomal protein uL10 family. In terms of assembly, part of the ribosomal stalk of the 50S ribosomal subunit. The N-terminus interacts with L11 and the large rRNA to form the base of the stalk. The C-terminus forms an elongated spine to which L12 dimers bind in a sequential fashion forming a multimeric L10(L12)X complex.

Forms part of the ribosomal stalk, playing a central role in the interaction of the ribosome with GTP-bound translation factors. This chain is Large ribosomal subunit protein uL10, found in Rippkaea orientalis (strain PCC 8801 / RF-1) (Cyanothece sp. (strain PCC 8801)).